The primary structure comprises 269 residues: Regulatory protein RecX (269 aa).

This sequence belongs to the RecX family.

The protein localises to the cytoplasm. In terms of biological role, modulates RecA activity. The protein is Regulatory protein RecX of Listeria monocytogenes serotype 4b (strain F2365).